A 304-amino-acid polypeptide reads, in one-letter code: MPRQAASRLVVGEGEGPPGASGPAATMLRSLLLHSLRLCAQTASCLVLFPRFLGTAFMLWLLDFLCIRKHFLRRRHPDHPEPEVELNSEGEEMPPDDPPICVSDDNRLCTLASLKAVWHGQKLDFFKQAHEGGPAPNSEVVRPDGFQSQRILDYAQGTRPLVLNFGSCTUPPFMARMSAFQRLVTKYQRDVDFLIIYIEEAHPSDGWVTTDSPYVIPQHRSLEDRVSAARVLQQGAPGCALVLDTMANSSSSAYGAYFERLYVIQSGTIMYQGGRGPDGYQVSELRTWLERYDEQLHGTRPHRF.

The segment at 1–22 (MPRQAASRLVVGEGEGPPGASG) is disordered. Residues 1–44 (MPRQAASRLVVGEGEGPPGASGPAATMLRSLLLHSLRLCAQTAS) are Cytoplasmic-facing. Residues 45-67 (CLVLFPRFLGTAFMLWLLDFLCI) traverse the membrane as a helical; Signal-anchor for type II membrane protein segment. Residues 68 to 304 (RKHFLRRRHP…QLHGTRPHRF (237 aa)) lie on the Extracellular side of the membrane. Sec170 is a catalytic residue. Sec170 is a non-standard amino acid (selenocysteine).

This sequence belongs to the iodothyronine deiodinase family. Monomer. Homodimer. May undergo minor heretodimerization with DIO1 and DIO2.

It is found in the cell membrane. It localises to the endosome membrane. The enzyme catalyses 3,3',5'-triiodo-L-thyronine + iodide + A + H(+) = L-thyroxine + AH2. The catalysed reaction is 3,3'-diiodo-L-thyronine + iodide + A + H(+) = 3,3',5-triiodo-L-thyronine + AH2. It catalyses the reaction 3-iodo-L-thyronine + iodide + A + H(+) = 3,5-diiodo-L-thyronine + AH2. It carries out the reaction L-thyronine + iodide + A + H(+) = 3-iodo-L-thyronine + AH2. The enzyme catalyses 3',5'-diiodo-L-thyronine + iodide + A + H(+) = 3,3',5'-triiodo-L-thyronine + AH2. The catalysed reaction is 3'-iodo-L-thyronine + iodide + A + H(+) = 3,3'-diiodo-L-thyronine + AH2. It catalyses the reaction 3,3',5'-triiodothyronamine + iodide + A + H(+) = 3,3',5,5'-tetraiodothyronamine + AH2. It carries out the reaction 3',5'-diiodothyronamine + iodide + A + H(+) = 3,3',5'-triiodothyronamine + AH2. The enzyme catalyses 3,3'-diiodothyronamine + iodide + A + H(+) = 3,3',5-triiodothyronamine + AH2. The catalysed reaction is 3-iodothyronamine + iodide + A + H(+) = 3,5-diiodothyronamine + AH2. It catalyses the reaction 3'-iodothyronamine + iodide + A + H(+) = 3,3'-diiodothyronamine + AH2. It carries out the reaction thyronamine + iodide + A + H(+) = 3-iodothyronamine + AH2. Functionally, plays a crucial role in the metabolism of thyroid hormones (TH) and has specific roles in TH activation and inactivation by deiodination. Catalyzes the deiodination of L-thyroxine (T4) to 3,3',5'-triiodothyronine (rT3), 3,5,3'-triiodothyronine (T3) to 3,3'-diiodothyronine (3,3'-T2), 3,5-diiodothyronine (3,5-T2) to 3-monoiodothyronine (3-T1), rT3 to 3',5'-diiodothyronine (3',5'-T2) and 3,3'-T2 to 3'-monoiodothyronine (3'-T1) via inner-ring deiodination (IRD). Catalyzes the deiodination of 3-T1 to L-thyronine (T0) via outer-ring deiodination (ORD). Catalyzes the tyrosyl ring deiodinations of 3,3',5,5'-tetraiodothyronamine, 3,3',5'-triiodothyronamine, 3,5,3'-triiodothyronamine, 3,5-diiodothyronamine, 3,3'-diiodothyronamine and 3-iodothyronamine. In Mus musculus (Mouse), this protein is Thyroxine 5-deiodinase (Dio3).